Reading from the N-terminus, the 57-residue chain is DNA-directed RNA polymerase subunit Rpo6 (57 aa).

Belongs to the archaeal Rpo6/eukaryotic RPB6 RNA polymerase subunit family. As to quaternary structure, part of the RNA polymerase complex.

It is found in the cytoplasm. It carries out the reaction RNA(n) + a ribonucleoside 5'-triphosphate = RNA(n+1) + diphosphate. In terms of biological role, DNA-dependent RNA polymerase (RNAP) catalyzes the transcription of DNA into RNA using the four ribonucleoside triphosphates as substrates. This Haloarcula marismortui (strain ATCC 43049 / DSM 3752 / JCM 8966 / VKM B-1809) (Halobacterium marismortui) protein is DNA-directed RNA polymerase subunit Rpo6.